Reading from the N-terminus, the 94-residue chain is Translation initiation factor 1A 2 (94 aa).

Residues 6 to 80 (GRRNLRMPSD…EKANIEWRYS (75 aa)) enclose the S1-like domain.

The protein belongs to the eIF-1A family.

Seems to be required for maximal rate of protein biosynthesis. Enhances ribosome dissociation into subunits and stabilizes the binding of the initiator Met-tRNA(I) to 40 S ribosomal subunits. The chain is Translation initiation factor 1A 2 from Haloquadratum walsbyi (strain DSM 16790 / HBSQ001).